A 238-amino-acid chain; its full sequence is Succinate dehydrogenase iron-sulfur subunit (238 aa).

The 2Fe-2S ferredoxin-type domain maps to 1–97 (MKLEFSIYRY…KIVIRPLPGL (97 aa)). [2Fe-2S] cluster-binding residues include C55, C60, and C75. Residues 139-169 (QREKLDGLYECILCACCSTSCPSFWWNPDKF) enclose the 4Fe-4S ferredoxin-type domain. 3 residues coordinate [4Fe-4S] cluster: C149, C152, and C155. C159 is a binding site for [3Fe-4S] cluster. W164 is a binding site for a ubiquinone. C206 and C212 together coordinate [3Fe-4S] cluster. C216 contributes to the [4Fe-4S] cluster binding site.

This sequence belongs to the succinate dehydrogenase/fumarate reductase iron-sulfur protein family. As to quaternary structure, part of an enzyme complex containing four subunits: a flavoprotein, an iron-sulfur, cytochrome b-556, and a hydrophobic anchor protein. Requires [2Fe-2S] cluster as cofactor. It depends on [3Fe-4S] cluster as a cofactor. [4Fe-4S] cluster serves as cofactor.

It catalyses the reaction a quinone + succinate = fumarate + a quinol. The protein operates within carbohydrate metabolism; tricarboxylic acid cycle; fumarate from succinate (bacterial route): step 1/1. Two distinct, membrane-bound, FAD-containing enzymes are responsible for the catalysis of fumarate and succinate interconversion; the fumarate reductase is used in anaerobic growth, and the succinate dehydrogenase is used in aerobic growth. The protein is Succinate dehydrogenase iron-sulfur subunit (sdhB) of Salmonella typhimurium (strain LT2 / SGSC1412 / ATCC 700720).